A 161-amino-acid polypeptide reads, in one-letter code: Glycine-rich RNA-binding protein blt801 (161 aa).

The 79-residue stretch at 6–84 (YRCFVGGLRW…RNITVNEAQS (79 aa)) folds into the RRM domain. Positions 72–161 (LDGRNITVNE…GGSGGGNWRE (90 aa)) are disordered. Phosphoserine; by PKA is present on S87. The span at 89–161 (GGGGFGGGGG…GGSGGGNWRE (73 aa)) shows a compositional bias: gly residues.

In terms of biological role, binds single-stranded DNA and homoribopolymers of guanine, uracil and adenine, but not cytosine. Also binds RNA, with a preference for RNA containing a high proportion of adenine within an open loop structure. Possibly has a role in RNA transcription or processing during stress. The polypeptide is Glycine-rich RNA-binding protein blt801 (Hordeum vulgare (Barley)).